Reading from the N-terminus, the 282-residue chain is ATP synthase gamma chain (282 aa).

The protein belongs to the ATPase gamma chain family. In terms of assembly, F-type ATPases have 2 components, CF(1) - the catalytic core - and CF(0) - the membrane proton channel. CF(1) has five subunits: alpha(3), beta(3), gamma(1), delta(1), epsilon(1). CF(0) has three main subunits: a, b and c.

The protein resides in the cell membrane. Its function is as follows. Produces ATP from ADP in the presence of a proton gradient across the membrane. The gamma chain is believed to be important in regulating ATPase activity and the flow of protons through the CF(0) complex. The polypeptide is ATP synthase gamma chain (Clostridium botulinum (strain Okra / Type B1)).